The primary structure comprises 150 residues: Large ribosomal subunit protein bL9 (150 aa).

It belongs to the bacterial ribosomal protein bL9 family.

Its function is as follows. Binds to the 23S rRNA. The protein is Large ribosomal subunit protein bL9 of Streptococcus pyogenes serotype M3 (strain SSI-1).